Here is a 278-residue protein sequence, read N- to C-terminus: MSTLRVLHEKSELGKTTVYPKEYAPHLLLPIPRDLNRKTLNVNVSEPPPFYGYDLWNAYELSWLNEKGKPFAARGEFIIPATSSHLIESKSFKLYLNSFNNERFADAAAVSQTMKRDLSKRVNESVTVNFILHETEIPVAYSPKGSLLDVLDIAIDTYSPDPNLLSTSQETVTETLYSHLLKSNCPVTGQPDWGSIEIHYTGPKIDHAQLLKYIISYRNHEEFHEACVERFFMDILRHCRPQELTVQARYTRRGGLDINPYRSTNPTFSVQNHRSFRQ.

Position 87–89 (87–89 (IES)) interacts with substrate. 89 to 90 (SK) contacts NADPH. Cysteine 185 functions as the Thioimide intermediate in the catalytic mechanism. Residue aspartate 192 is the Proton donor of the active site. Position 224–225 (224–225 (HE)) interacts with substrate. 253 to 254 (RG) is a binding site for NADPH. The interval 255–278 (GLDINPYRSTNPTFSVQNHRSFRQ) is disordered. A compositionally biased stretch (polar residues) spans 261-278 (YRSTNPTFSVQNHRSFRQ).

The protein belongs to the GTP cyclohydrolase I family. QueF type 2 subfamily. As to quaternary structure, homodimer.

The protein resides in the cytoplasm. It catalyses the reaction 7-aminomethyl-7-carbaguanine + 2 NADP(+) = 7-cyano-7-deazaguanine + 2 NADPH + 3 H(+). The protein operates within tRNA modification; tRNA-queuosine biosynthesis. Its function is as follows. Catalyzes the NADPH-dependent reduction of 7-cyano-7-deazaguanine (preQ0) to 7-aminomethyl-7-deazaguanine (preQ1). The chain is NADPH-dependent 7-cyano-7-deazaguanine reductase from Coxiella burnetii (strain Dugway 5J108-111).